Reading from the N-terminus, the 371-residue chain is Serpentine receptor class delta-1 (371 aa).

The next 7 membrane-spanning stretches (helical) occupy residues 31 to 51 (LSEVICGFGIVLNLLLIYVIF), 62 to 82 (AVLLFNFAIFDLLTCVASLLA), 109 to 129 (CFFCHCFVCHAMAHSQWILLI), 148 to 168 (MIVIVSLFYAMSAVIFLFYFW), 209 to 229 (IPSLIAIFYMTMPCVPIYFII), 267 to 287 (AIPIFWLVASGIFTLAEFGII), and 295 to 315 (ITFRLMDCIPSSSPLVAFIFI). Positions 344–371 (EKFNQPPKQPTNPAQQSANNDAAKTEKV) are disordered. The segment covering 354–365 (TNPAQQSANNDA) has biased composition (polar residues).

This sequence belongs to the nematode receptor-like protein srd family.

It localises to the membrane. This Caenorhabditis elegans protein is Serpentine receptor class delta-1 (srd-1).